A 300-amino-acid chain; its full sequence is NAD kinase (300 aa).

D75 functions as the Proton acceptor in the catalytic mechanism. NAD(+) contacts are provided by residues 75 to 76 (DG), 149 to 150 (ND), R177, D179, 190 to 195 (TAYALS), A214, and Q248.

It belongs to the NAD kinase family. Requires a divalent metal cation as cofactor.

It is found in the cytoplasm. The enzyme catalyses NAD(+) + ATP = ADP + NADP(+) + H(+). Its function is as follows. Involved in the regulation of the intracellular balance of NAD and NADP, and is a key enzyme in the biosynthesis of NADP. Catalyzes specifically the phosphorylation on 2'-hydroxyl of the adenosine moiety of NAD to yield NADP. The protein is NAD kinase of Burkholderia orbicola (strain MC0-3).